Here is a 196-residue protein sequence, read N- to C-terminus: MLFRYLVWLFRFIKVKNVASISLLVIGSNYLTTAIANNTSISPTTSSNHITTAIPNNTSILPTTSSNHITTAISNNITDKDDYTHFSTDKTISDSLTPITLYRAIRSTLNDTGTKTMTDHGLTRPYRPTTVIFHSDTSLPVKNATRDNSIKKIYRQVISFFIQSNPLFPCFKNHEVFLNLANILNTILCIILIKNV.

Repeat copies occupy residues 28–48 and 49–68. The stretch at 69–87 is one 3; approximate repeat; that stretch reads ITTAISNNITDKDDYTHFS.

The protein belongs to the asfivirus I196L family.

The polypeptide is Late protein I196L (Ornithodoros (relapsing fever ticks)).